A 153-amino-acid chain; its full sequence is Ribosome maturation factor RimP (153 aa).

It belongs to the RimP family.

The protein localises to the cytoplasm. Its function is as follows. Required for maturation of 30S ribosomal subunits. The chain is Ribosome maturation factor RimP from Clostridium tetani (strain Massachusetts / E88).